Reading from the N-terminus, the 173-residue chain is NADH-quinone oxidoreductase subunit B (173 aa).

[4Fe-4S] cluster contacts are provided by cysteine 52, cysteine 53, cysteine 117, and cysteine 147.

Belongs to the complex I 20 kDa subunit family. In terms of assembly, NDH-1 is composed of 14 different subunits. Subunits NuoB, C, D, E, F, and G constitute the peripheral sector of the complex. Requires [4Fe-4S] cluster as cofactor.

It localises to the cell inner membrane. It catalyses the reaction a quinone + NADH + 5 H(+)(in) = a quinol + NAD(+) + 4 H(+)(out). Its function is as follows. NDH-1 shuttles electrons from NADH, via FMN and iron-sulfur (Fe-S) centers, to quinones in the respiratory chain. Couples the redox reaction to proton translocation (for every two electrons transferred, four hydrogen ions are translocated across the cytoplasmic membrane), and thus conserves the redox energy in a proton gradient. In Pelagibacter ubique (strain HTCC1062), this protein is NADH-quinone oxidoreductase subunit B.